Reading from the N-terminus, the 144-residue chain is Small ribosomal subunit protein eS10A (144 aa).

A disordered region spans residues 90–144; sequence THKRQVRPTAPRAGRPEPRERASADAGYRRAEKKDEGAAPSGFAPSFRGGFGRPQ. A compositionally biased stretch (basic and acidic residues) spans 103-126; it reads GRPEPRERASADAGYRRAEKKDEG.

It belongs to the eukaryotic ribosomal protein eS10 family. As to quaternary structure, component of the small ribosomal subunit (SSU). Mature yeast ribosomes consist of a small (40S) and a large (60S) subunit. The 40S small subunit contains 1 molecule of ribosomal RNA (18S rRNA) and at least 33 different proteins. The large 60S subunit contains 3 rRNA molecules (25S, 5.8S and 5S rRNA) and at least 46 different proteins. eS10 interacts with GCN1 (via middle region); this interaction is direct and promotes GCN2 kinase activity.

The protein localises to the cytoplasm. In terms of biological role, component of the ribosome, a large ribonucleoprotein complex responsible for the synthesis of proteins in the cell. The small ribosomal subunit (SSU) binds messenger RNAs (mRNAs) and translates the encoded message by selecting cognate aminoacyl-transfer RNA (tRNA) molecules. The large subunit (LSU) contains the ribosomal catalytic site termed the peptidyl transferase center (PTC), which catalyzes the formation of peptide bonds, thereby polymerizing the amino acids delivered by tRNAs into a polypeptide chain. The nascent polypeptides leave the ribosome through a tunnel in the LSU and interact with protein factors that function in enzymatic processing, targeting, and the membrane insertion of nascent chains at the exit of the ribosomal tunnel. eS10 plays a role as a positive regulator of the GCN2 kinase activity by stimulating GCN1-mediated GCN2 activation. This is Small ribosomal subunit protein eS10A (rps1001) from Schizosaccharomyces pombe (strain 972 / ATCC 24843) (Fission yeast).